We begin with the raw amino-acid sequence, 537 residues long: Apolipoprotein N-acyltransferase (537 aa).

Transmembrane regions (helical) follow at residues 10–30 (IALA…ITAG), 37–57 (LAPF…VWLI), 76–96 (YWFG…AFFV), 107–127 (FAVL…FALA), 181–201 (IGLW…ATLI), and 210–230 (AWRA…FGAI). Residues 248–501 (MQPNLQQDAK…EGILDASLPA (254 aa)) enclose the CN hydrolase domain. The active-site Proton acceptor is the E295. K360 is a catalytic residue. C413 (nucleophile) is an active-site residue. The chain crosses the membrane as a helical span at residues 507-527 (IYARVGDVPAAVLVALAVLLA).

The protein belongs to the CN hydrolase family. Apolipoprotein N-acyltransferase subfamily.

The protein localises to the cell inner membrane. It carries out the reaction N-terminal S-1,2-diacyl-sn-glyceryl-L-cysteinyl-[lipoprotein] + a glycerophospholipid = N-acyl-S-1,2-diacyl-sn-glyceryl-L-cysteinyl-[lipoprotein] + a 2-acyl-sn-glycero-3-phospholipid + H(+). It functions in the pathway protein modification; lipoprotein biosynthesis (N-acyl transfer). Catalyzes the phospholipid dependent N-acylation of the N-terminal cysteine of apolipoprotein, the last step in lipoprotein maturation. The protein is Apolipoprotein N-acyltransferase of Bradyrhizobium diazoefficiens (strain JCM 10833 / BCRC 13528 / IAM 13628 / NBRC 14792 / USDA 110).